Reading from the N-terminus, the 158-residue chain is Phosphopantetheine adenylyltransferase (158 aa).

T10 provides a ligand contact to substrate. Residues T10–F11 and H18 contribute to the ATP site. Substrate-binding residues include K42, L74, and R88. Residues G89–R91, E99, and W124–T130 each bind ATP.

It belongs to the bacterial CoaD family. As to quaternary structure, homohexamer. Mg(2+) serves as cofactor.

The protein resides in the cytoplasm. The enzyme catalyses (R)-4'-phosphopantetheine + ATP + H(+) = 3'-dephospho-CoA + diphosphate. It participates in cofactor biosynthesis; coenzyme A biosynthesis; CoA from (R)-pantothenate: step 4/5. In terms of biological role, reversibly transfers an adenylyl group from ATP to 4'-phosphopantetheine, yielding dephospho-CoA (dPCoA) and pyrophosphate. This is Phosphopantetheine adenylyltransferase from Actinobacillus pleuropneumoniae serotype 3 (strain JL03).